The following is a 148-amino-acid chain: MQNPTIVIGVIGADCHAVGNKVLDRVFTMHNFSVINLGVMVSQDEYIDAAIETGAQAIVVSSIYGHGEVDCIGMRENCVERGIGEILLYVGGNLVIGKHDFSEIETKFKGMGFNRVFAPDTDLELVCSLMKRDIERVMQSEEAPEGMQ.

Positions 3–140 (NPTIVIGVIG…KRDIERVMQS (138 aa)) constitute a B12-binding domain. Residues 13–17 (ADCHA), H16, 61–63 (SSI), and 93–97 (NLVIG) each bind adenosylcob(III)alamin.

It belongs to the methylaspartate mutase GlmS subunit family. As to quaternary structure, heterotetramer composed of 2 epsilon subunits (GlmE) and 2 sigma subunits (GlmS). GlmE exists as a homodimer and GlmS as a monomer. Adenosylcob(III)alamin is required as a cofactor.

The enzyme catalyses (2S,3S)-3-methyl-L-aspartate = L-glutamate. Its pathway is amino-acid degradation; L-glutamate degradation via mesaconate pathway; acetate and pyruvate from L-glutamate: step 1/4. In terms of biological role, catalyzes the carbon skeleton rearrangement of L-glutamate to L-threo-3-methylaspartate ((2S,3S)-3-methylaspartate). The protein is Glutamate mutase sigma subunit of Yersinia enterocolitica serotype O:8 / biotype 1B (strain NCTC 13174 / 8081).